The sequence spans 156 residues: 13 kDa prolamin C (156 aa).

The signal sequence occupies residues 1 to 19 (MKIIFVFALLAIVACNASA). Residues 77-84 (QQQCCQQL) form an octapeptide unique to cereal prolamins region.

The protein belongs to the prolamin family.

Its subcellular location is the vacuole. The protein resides in the aleurone grain. In terms of biological role, seed storage protein; serves as a source of nitrogen, carbon and sulfur for the young developing seedling. The sequence is that of 13 kDa prolamin C (PROLM25) from Oryza sativa subsp. japonica (Rice).